The following is a 425-amino-acid chain: MALILNIDAREIIDSRGNPTVEVDVLLDDGSFGRAAVPSGASTGVHEAHELRDGGERYQGKGVLNAVKNVIEDIDEELMGVEADDQRLIDQLMRDLDGTENKSKLGANAILGVSMAVARAAAESADLPLFRYVGGPNAHVLPVPMMNILNGGAHADSGVDVQEFMIAPIGAETFSEALRVGAEVYHTLKKVIKDKGLSTGLGDEGGFAPSVDSTKAALDLIVEAIEKAGFKVGEDVALALDVASSEFFKDGKYHFEGGEHTAEEMAKVYEDLIEEYPIVSIEDPLQEDDWEGYTALTAKIGDKVQLVGDDFFVTNPQRLAKGIEEKAANALLVKVNQIGTLTETFDAVELAHRNGYRSMMSHRSGETEDTTIADLAVALNCGQIKTGAPARSERVAKYNQLLRIEEILGDAAVYAGRSAFPRFTK.

(2R)-2-phosphoglycerate is bound at residue Q162. The active-site Proton donor is E204. Mg(2+) contacts are provided by D241, E282, and D309. Residues K334, R363, S364, and K385 each contribute to the (2R)-2-phosphoglycerate site. The active-site Proton acceptor is K334.

The protein belongs to the enolase family. The cofactor is Mg(2+).

It localises to the cytoplasm. The protein resides in the secreted. The protein localises to the cell surface. The enzyme catalyses (2R)-2-phosphoglycerate = phosphoenolpyruvate + H2O. Its pathway is carbohydrate degradation; glycolysis; pyruvate from D-glyceraldehyde 3-phosphate: step 4/5. Its function is as follows. Catalyzes the reversible conversion of 2-phosphoglycerate (2-PG) into phosphoenolpyruvate (PEP). It is essential for the degradation of carbohydrates via glycolysis. This chain is Enolase, found in Corynebacterium jeikeium (strain K411).